Consider the following 40-residue polypeptide: Photosystem II reaction center protein J (40 aa).

The helical transmembrane segment at 8-28 (IPLWLIGTVTGTLVIGLIGIF) threads the bilayer.

Belongs to the PsbJ family. PSII is composed of 1 copy each of membrane proteins PsbA, PsbB, PsbC, PsbD, PsbE, PsbF, PsbH, PsbI, PsbJ, PsbK, PsbL, PsbM, PsbT, PsbX, PsbY, PsbZ, Psb30/Ycf12, at least 3 peripheral proteins of the oxygen-evolving complex and a large number of cofactors. It forms dimeric complexes.

Its subcellular location is the plastid. The protein resides in the chloroplast thylakoid membrane. In terms of biological role, one of the components of the core complex of photosystem II (PSII). PSII is a light-driven water:plastoquinone oxidoreductase that uses light energy to abstract electrons from H(2)O, generating O(2) and a proton gradient subsequently used for ATP formation. It consists of a core antenna complex that captures photons, and an electron transfer chain that converts photonic excitation into a charge separation. The protein is Photosystem II reaction center protein J of Cycas taitungensis (Prince sago).